Reading from the N-terminus, the 191-residue chain is Ribosomal RNA small subunit methyltransferase G (191 aa).

Residues Gly-59, 111-112 (IE), and Arg-124 each bind S-adenosyl-L-methionine.

Belongs to the methyltransferase superfamily. RNA methyltransferase RsmG family.

It is found in the cytoplasm. In terms of biological role, specifically methylates the N7 position of a guanine in 16S rRNA. The polypeptide is Ribosomal RNA small subunit methyltransferase G (Mycoplasma pneumoniae (strain ATCC 29342 / M129 / Subtype 1) (Mycoplasmoides pneumoniae)).